A 160-amino-acid polypeptide reads, in one-letter code: Transcription antitermination protein NusB (160 aa).

This sequence belongs to the NusB family.

Functionally, involved in transcription antitermination. Required for transcription of ribosomal RNA (rRNA) genes. Binds specifically to the boxA antiterminator sequence of the ribosomal RNA (rrn) operons. In Mycolicibacterium smegmatis (strain ATCC 700084 / mc(2)155) (Mycobacterium smegmatis), this protein is Transcription antitermination protein NusB.